The sequence spans 436 residues: DEAD-box ATP-dependent RNA helicase CshB (436 aa).

Positions 4-32 (QTFTQYDFKPFLIDAVRELRFTEPTGIQQ) match the Q motif motif. The region spanning 35–209 (FPVVKKGVSV…KKYMENPEHI (175 aa)) is the Helicase ATP-binding domain. Position 48 to 55 (48 to 55 (SQTGSGKT)) interacts with ATP. The DEAD box motif lies at 157 to 160 (DEAD). A Helicase C-terminal domain is found at 240–388 (MLLQFKPYLA…WADLGERRRR (149 aa)). Residues 385–436 (RRRRKSRKKPNDELDVMATKVIKKPKKVKPNYKRKLATERDKVKRKYSNKKR) are disordered. Basic residues-rich tracts occupy residues 405–419 (VIKKPKKVKPNYKRK) and 427–436 (VKRKYSNKKR).

Belongs to the DEAD box helicase family. CshB subfamily.

It localises to the cytoplasm. The enzyme catalyses ATP + H2O = ADP + phosphate + H(+). Functionally, probable DEAD-box RNA helicase. May work in conjunction with the cold shock proteins to ensure proper initiation of transcription at low and optimal temperatures. Unwinds dsRNA in both 5'- and 3'-directions and shows RNA-dependent ATPase activity. Probably has a somewhat redundant function with CshA, as cshA can partially complement the growth effects of a cshB deletion. The chain is DEAD-box ATP-dependent RNA helicase CshB from Bacillus cereus (strain ATCC 14579 / DSM 31 / CCUG 7414 / JCM 2152 / NBRC 15305 / NCIMB 9373 / NCTC 2599 / NRRL B-3711).